Here is a 715-residue protein sequence, read N- to C-terminus: Patatin-like phospholipase domain-containing protein ATEG_02594 (715 aa).

The chain crosses the membrane as a helical span at residues 84–104 (WPFLAFVLGWISFLGVAYILT). Residues 274–465 (LCLSGGATFA…RTDIPIKALN (192 aa)) enclose the PNPLA domain. The GXSXG motif lies at 305–309 (GTSGG). Ser307 acts as the Nucleophile in catalysis. The active-site Proton acceptor is the Asp452. The tract at residues 613 to 715 (TAPRGGGRAT…DVDSDTWKGQ (103 aa)) is disordered. A compositionally biased stretch (basic and acidic residues) spans 652–661 (RTGEYSKEAD). Over residues 665-678 (AEMSDSSGVDSATA) the composition is skewed to polar residues.

It belongs to the PLPL family.

Its subcellular location is the membrane. Functionally, probable lipid hydrolase. In Aspergillus terreus (strain NIH 2624 / FGSC A1156), this protein is Patatin-like phospholipase domain-containing protein ATEG_02594.